A 303-amino-acid polypeptide reads, in one-letter code: uncharacterized protein (303 aa).

Disordered regions lie at residues 1-89 (MTSP…NVRS) and 132-159 (SELPDLSGPVQRTVPCKPSPDRGSSTPR). Positions 61–89 (RASQSGYRPSDPLTTTRQSNPAPGANVRS) are enriched in polar residues. The next 2 helical transmembrane spans lie at 205 to 225 (LLLSVALFFVWMIAVAFLYLL) and 264 to 284 (VLVGLVNIVLMTTMAAIAAFV).

This sequence to M.tuberculosis Rv0007.

The protein resides in the cell membrane. This is an uncharacterized protein from Mycobacterium leprae (strain TN).